A 245-amino-acid polypeptide reads, in one-letter code: High affinity immunoglobulin epsilon receptor subunit alpha (245 aa).

A signal peptide spans 1–23; that stretch reads MDTGGSARLCLALVLISLGVMLT. Residues 24 to 204 are Extracellular-facing; sequence ATQKSVVSLD…DYTIEYRWLQ (181 aa). Ig-like domains follow at residues 28–103 and 113–181; these read SVVS…KPVY and LQSS…LNKV. Cys-49 and Cys-91 are disulfide-bonded. N-linked (GlcNAc...) asparagine glycosylation is found at Asn-52, Asn-53, Asn-58, Asn-65, Asn-123, Asn-158, and Asn-167. The cysteines at positions 130 and 174 are disulfide-linked. The helical transmembrane segment at 205 to 223 threads the bilayer; sequence LIFPSLAVILFAVDTGLWF. The Cytoplasmic segment spans residues 224 to 245; it reads STHKQFESILKIQKTGKGKKKG.

As to quaternary structure, tetramer of an alpha chain, a beta chain, and two disulfide linked gamma chains. Interacts with IGHE (via CH3 region). As to expression, expressed in leukocytes and pinealocytes at night (at protein level).

It is found in the cell membrane. Its subcellular location is the secreted. High-affinity receptor for immunoglobulin epsilon/IgE. Mediates IgE effector functions in myeloid cells. Upon IgE binding and antigen/allergen cross-linking initiates signaling pathways that lead to myeloid cell activation and differentiation. On mast cells, basophils and eosinophils stimulates the secretion of vasoactive amines, lipid mediators and cytokines that contribute to inflammatory response, tissue remodeling and cytotoxicity against microbes. Triggers the immediate hypersensitivity response to allergens as a host defense mechanism against helminth parasites, pathogenic bacteria and venom toxicity. When dysregulated, it can elicit harmful life-threatening allergic and anaphylactic reactions. This chain is High affinity immunoglobulin epsilon receptor subunit alpha (Fcer1a), found in Rattus norvegicus (Rat).